We begin with the raw amino-acid sequence, 311 residues long: Beta-lactamase (311 aa).

The segment at residues 1–36 is a signal peptide (tat-type signal); the sequence is MRKPTSSLTRRSVLGAGLGLGGALALGSTTASAASA. The active-site Acyl-ester intermediate is the Ser-86. 252–254 is a substrate binding site; that stretch reads KSG.

This sequence belongs to the class-A beta-lactamase family. Post-translationally, predicted to be exported by the Tat system. The position of the signal peptide cleavage has not been experimentally proven.

It carries out the reaction a beta-lactam + H2O = a substituted beta-amino acid. Its function is as follows. Hydrolyzes benzylpenicillin and cloxacillin (at 10% of the rate of benzylpenicillin). The chain is Beta-lactamase (bla) from Streptomyces cellulosae.